A 422-amino-acid chain; its full sequence is Protein phosphatase methylesterase 1 (422 aa).

Residues Met1–Ser27 are disordered. Catalysis depends on residues Ser207, Asp234, and His371.

Belongs to the AB hydrolase superfamily.

It catalyses the reaction [phosphatase 2A protein]-C-terminal L-leucine methyl ester + H2O = [phosphatase 2A protein]-C-terminal L-leucine + methanol + H(+). Functionally, demethylates proteins that have been reversibly carboxymethylated. Demethylates the phosphatase PP2A catalytic subunit. The polypeptide is Protein phosphatase methylesterase 1 (PPE1) (Cryptococcus neoformans var. neoformans serotype D (strain JEC21 / ATCC MYA-565) (Filobasidiella neoformans)).